The sequence spans 578 residues: Kelch repeat-containing protein kel-10 (578 aa).

Residues 51 to 118 (PTVTLVLRNN…PKAFEQGIKP (68 aa)) form the BTB domain. The region spanning 158-236 (IKIFRLALLY…NSPLQSDRMA (79 aa)) is the BACK domain. 6 Kelch repeats span residues 265–315 (AIVC…VVED), 316–362 (KLIV…RIND), 368–414 (LIFA…TIDN), 416–462 (IVVI…SIMN), 464–510 (VCMI…QMDT), and 512–558 (SIYV…TLSD).

This chain is Kelch repeat-containing protein kel-10, found in Caenorhabditis elegans.